A 520-amino-acid polypeptide reads, in one-letter code: Cholesterol side-chain cleavage enzyme, mitochondrial (520 aa).

The N-terminal 36 residues, 1-36 (MLAKGLSLRSVLAKGCQPFLSPTWQSSVLATGGGAN), are a transit peptide targeting the mitochondrion. Cys-458 serves as a coordination point for heme.

It belongs to the cytochrome P450 family. In terms of assembly, interacts with FDX1/adrenodoxin. The cofactor is heme.

It is found in the mitochondrion inner membrane. It catalyses the reaction 6 reduced [adrenodoxin] + cholesterol + 3 O2 + 6 H(+) = 4-methylpentanal + pregnenolone + 6 oxidized [adrenodoxin] + 4 H2O. The enzyme catalyses 2 reduced [adrenodoxin] + cholesterol + O2 + 2 H(+) = (22R)-hydroxycholesterol + 2 oxidized [adrenodoxin] + H2O. The catalysed reaction is (22R)-hydroxycholesterol + 2 reduced [adrenodoxin] + O2 + 2 H(+) = (20R,22R)-20,22-dihydroxycholesterol + 2 oxidized [adrenodoxin] + H2O. It carries out the reaction (20R,22R)-20,22-dihydroxycholesterol + 2 reduced [adrenodoxin] + O2 + 2 H(+) = 4-methylpentanal + pregnenolone + 2 oxidized [adrenodoxin] + 2 H2O. The protein operates within lipid metabolism; C21-steroid hormone metabolism. Its pathway is steroid metabolism; cholesterol metabolism. Functionally, a cytochrome P450 monooxygenase that catalyzes the side-chain hydroxylation and cleavage of cholesterol to pregnenolone, the precursor of most steroid hormones. Catalyzes three sequential oxidation reactions of cholesterol, namely the hydroxylation at C22 followed with the hydroxylation at C20 to yield 20R,22R-hydroxycholesterol that is further cleaved between C20 and C22 to yield the C21-steroid pregnenolone and 4-methylpentanal. Mechanistically, uses molecular oxygen inserting one oxygen atom into a substrate and reducing the second into a water molecule. Two electrons are provided by NADPH via a two-protein mitochondrial transfer system comprising flavoprotein FDXR (adrenodoxin/ferredoxin reductase) and nonheme iron-sulfur protein FDX1 or FDX2 (adrenodoxin/ferredoxin). The polypeptide is Cholesterol side-chain cleavage enzyme, mitochondrial (CYP11A1) (Mesocricetus auratus (Golden hamster)).